The sequence spans 433 residues: 23S rRNA (uracil(1939)-C(5))-methyltransferase RlmD (433 aa).

Residues 10-68 (RTTTRQIITVSVNDLDSFGQGVARHNGKTLFIPGLLPQENAEVAVTEDKKQYARAKVVR) form the TRAM domain. Residues Cys81, Cys87, Cys90, and Cys162 each coordinate [4Fe-4S] cluster. Positions 265, 294, 299, 315, 342, and 363 each coordinate S-adenosyl-L-methionine. Catalysis depends on Cys389, which acts as the Nucleophile.

This sequence belongs to the class I-like SAM-binding methyltransferase superfamily. RNA M5U methyltransferase family. RlmD subfamily.

It catalyses the reaction uridine(1939) in 23S rRNA + S-adenosyl-L-methionine = 5-methyluridine(1939) in 23S rRNA + S-adenosyl-L-homocysteine + H(+). Functionally, catalyzes the formation of 5-methyl-uridine at position 1939 (m5U1939) in 23S rRNA. The chain is 23S rRNA (uracil(1939)-C(5))-methyltransferase RlmD from Shigella flexneri serotype 5b (strain 8401).